The sequence spans 233 residues: Lipoprotein-releasing system ATP-binding protein LolD (233 aa).

Positions 7-233 (IHCEKLSKTY…QLQSESERNH (227 aa)) constitute an ABC transporter domain. An ATP-binding site is contributed by 43 to 50 (GASGAGKS).

It belongs to the ABC transporter superfamily. Lipoprotein translocase (TC 3.A.1.125) family. The complex is composed of two ATP-binding proteins (LolD) and two transmembrane proteins (LolC and LolE).

The protein localises to the cell inner membrane. Its function is as follows. Part of the ABC transporter complex LolCDE involved in the translocation of mature outer membrane-directed lipoproteins, from the inner membrane to the periplasmic chaperone, LolA. Responsible for the formation of the LolA-lipoprotein complex in an ATP-dependent manner. The sequence is that of Lipoprotein-releasing system ATP-binding protein LolD from Coxiella burnetii (strain RSA 493 / Nine Mile phase I).